Here is a 178-residue protein sequence, read N- to C-terminus: Large ribosomal subunit protein uL5 (178 aa).

It belongs to the universal ribosomal protein uL5 family. In terms of assembly, part of the 50S ribosomal subunit; part of the 5S rRNA/L5/L18/L25 subcomplex. Contacts the 5S rRNA and the P site tRNA. Forms a bridge to the 30S subunit in the 70S ribosome.

Its function is as follows. This is one of the proteins that bind and probably mediate the attachment of the 5S RNA into the large ribosomal subunit, where it forms part of the central protuberance. In the 70S ribosome it contacts protein S13 of the 30S subunit (bridge B1b), connecting the 2 subunits; this bridge is implicated in subunit movement. Contacts the P site tRNA; the 5S rRNA and some of its associated proteins might help stabilize positioning of ribosome-bound tRNAs. The chain is Large ribosomal subunit protein uL5 from Wolbachia pipientis subsp. Culex pipiens (strain wPip).